Here is a 322-residue protein sequence, read N- to C-terminus: MSEIKTDDPKRGIKLRGADKTARIPIKVVPLQEKLKKPEWIRAKLPSRKFFEIKDILREQKMHTVCEEASCPNIGECFSKGTATFMIMGDICTRRCPFCDVGHGRPNMLDPDEPRNLAESVKAMNLRYVVITSVDRDDLRDGGAQHFADCIKAIRETSPNTKIEILVPDFRGRLDIALKILAETPPDVMNHNLETHPSLYRKARPGANYQHSLDLLKRYKEMMPHIPTKSGIMVGLGETDEDVREIMRDMRAHNIEMITIGQYLQPSDGHLPVLRYVTPEQFKIFEKEAYELGFSNAAIGAMVRSSYHADEQAAEALRECEF.

[4Fe-4S] cluster-binding residues include C66, C71, C77, C92, C96, C99, and S306. The 218-residue stretch at 78 to 295 (FSKGTATFMI…EKEAYELGFS (218 aa)) folds into the Radical SAM core domain.

Belongs to the radical SAM superfamily. Lipoyl synthase family. [4Fe-4S] cluster is required as a cofactor.

It is found in the cytoplasm. It catalyses the reaction [[Fe-S] cluster scaffold protein carrying a second [4Fe-4S](2+) cluster] + N(6)-octanoyl-L-lysyl-[protein] + 2 oxidized [2Fe-2S]-[ferredoxin] + 2 S-adenosyl-L-methionine + 4 H(+) = [[Fe-S] cluster scaffold protein] + N(6)-[(R)-dihydrolipoyl]-L-lysyl-[protein] + 4 Fe(3+) + 2 hydrogen sulfide + 2 5'-deoxyadenosine + 2 L-methionine + 2 reduced [2Fe-2S]-[ferredoxin]. It participates in protein modification; protein lipoylation via endogenous pathway; protein N(6)-(lipoyl)lysine from octanoyl-[acyl-carrier-protein]: step 2/2. Functionally, catalyzes the radical-mediated insertion of two sulfur atoms into the C-6 and C-8 positions of the octanoyl moiety bound to the lipoyl domains of lipoate-dependent enzymes, thereby converting the octanoylated domains into lipoylated derivatives. In Neisseria meningitidis serogroup C (strain 053442), this protein is Lipoyl synthase.